The chain runs to 255 residues: Thiazole synthase (255 aa).

The active-site Schiff-base intermediate with DXP is the Lys96. Residues Gly157, Ala183–Gly184, and Asn205–Thr206 contribute to the 1-deoxy-D-xylulose 5-phosphate site.

The protein belongs to the ThiG family. In terms of assembly, homotetramer. Forms heterodimers with either ThiH or ThiS.

It localises to the cytoplasm. The catalysed reaction is [ThiS sulfur-carrier protein]-C-terminal-Gly-aminoethanethioate + 2-iminoacetate + 1-deoxy-D-xylulose 5-phosphate = [ThiS sulfur-carrier protein]-C-terminal Gly-Gly + 2-[(2R,5Z)-2-carboxy-4-methylthiazol-5(2H)-ylidene]ethyl phosphate + 2 H2O + H(+). It participates in cofactor biosynthesis; thiamine diphosphate biosynthesis. Catalyzes the rearrangement of 1-deoxy-D-xylulose 5-phosphate (DXP) to produce the thiazole phosphate moiety of thiamine. Sulfur is provided by the thiocarboxylate moiety of the carrier protein ThiS. In vitro, sulfur can be provided by H(2)S. The protein is Thiazole synthase of Geobacillus sp. (strain WCH70).